The chain runs to 1368 residues: Inactive tyrosine-protein kinase PRAG1 (1368 aa).

Residues Cys200 to Gly236 are disordered. Phosphotyrosine; by CSK is present on Tyr238. Residues Ser297–Gly330 form a disordered region. The segment covering Ser317–Gly330 has biased composition (low complexity). Phosphotyrosine; by CSK is present on residues Tyr343 and Tyr391. Disordered regions lie at residues Ala392 to Ala443, Leu499 to Ser605, and His636 to Val792. The segment covering Val414–Ser434 has biased composition (polar residues). Positions Arg502–Pro518 are enriched in basic and acidic residues. Low complexity-rich tracts occupy residues Pro522–Ser535 and Ser550–Pro563. Polar residues-rich tracts occupy residues Thr564–Gly574 and Ser652–Ala666. Phosphoserine occurs at positions 667 and 716. Polar residues-rich tracts occupy residues Val707–Pro717 and Ser725–Cys741. A phosphoserine mark is found at Ser753 and Ser797. 2 disordered regions span residues Pro799 to Leu818 and Asn873 to Gln901. The segment covering Ala887–Gln901 has biased composition (low complexity). The segment at Ser906–Gly949 is required for homodimerization. In terms of domain architecture, Protein kinase spans Val940–Leu1291. Over residues Ser1134–Val1144 the composition is skewed to polar residues. The tract at residues Ser1134 to Pro1166 is disordered. The span at Pro1145–Cys1162 shows a compositional bias: low complexity. The interval Gly1293–Leu1368 is required for homodimerization.

It belongs to the protein kinase superfamily. Homodimer. Dimerization leads to the catalytic activation of CSK. Interacts (via C-terminus) with RND2. Interacts with CSK (via SH2 domain) in a Tyr-391 phosphorylation-dependent manner; this interaction potentiates kinase activity of CSK. Interacts with NOTCH1 intracellular domain (N1ICD). Forms a complex with N1ICD and MAML1, in a MAML1-dependent manner. Phosphorylated by CSK on Tyr-238, Tyr-343, and Tyr-391; Tyr-391 is a primary site of phosphorylation. Highly-expressed in brain, including cortical and hippocampal pyramidal neurons, as well as in kidney, spleen, colon and small intestine.

Its subcellular location is the cytoplasm. It localises to the nucleus. The protein resides in the cell junction. The protein localises to the focal adhesion. In terms of biological role, catalytically inactive protein kinase that acts as a scaffold protein. Functions as an effector of the small GTPase RND2, which stimulates RhoA activity and inhibits NGF-induced neurite outgrowth. Promotes Src family kinase (SFK) signallig by regulating the subcellular localization of CSK, a negative regulator of these kinases, leading to the regulation of cell morphology and motility by a CSK-dependent mechanism. Acts as a critical coactivator of Notch signaling. This chain is Inactive tyrosine-protein kinase PRAG1, found in Rattus norvegicus (Rat).